The chain runs to 583 residues: Undecaprenyl phosphate-alpha-4-amino-4-deoxy-L-arabinose arabinosyl transferase 2 (583 aa).

A disordered region spans residues 1 to 20 (MTSRIQMHRTSPPPAYGTSA). A run of 12 helical transmembrane segments spans residues 42-62 (LLLVAFGLFYLLPLTSHGLWI), 113-135 (LFGVRIASALSTGLSVLLAYLIT), 145-165 (SFAAALLYMSFGLIAGQAGYS), 166-186 (NLDPQFTLWVNLSLVALWFAL), 209-229 (FMTKGFLAWLLPVLIALPYMI), 241-261 (GLVAVLVAIGISLPWVLSIHA), 290-310 (WWFYLPLLVASSLPWAALLPG), 321-341 (QAPTGFLLLWFLLPLAFFSLS), 345-365 (LPTYIMPCLLPLAVLMGSALI), 380-400 (SLLNLLIGVAAMVALLYIQLT), 409-429 (MLGLSLVFIMLMGWIIANLLP), and 440-460 (PALGIWLLVALLPAGMPGFIV).

The protein belongs to the glycosyltransferase 83 family.

It is found in the cell inner membrane. It catalyses the reaction 4-amino-4-deoxy-alpha-L-arabinopyranosyl di-trans,octa-cis-undecaprenyl phosphate + lipid IVA = lipid IIA + di-trans,octa-cis-undecaprenyl phosphate.. The protein operates within lipopolysaccharide metabolism; 4-amino-4-deoxy-beta-L-arabinose-lipid A biosynthesis. Its function is as follows. Catalyzes the transfer of the L-Ara4N moiety of the glycolipid undecaprenyl phosphate-alpha-L-Ara4N to lipid A. The modified arabinose is attached to lipid A and is required for resistance to polymyxin and cationic antimicrobial peptides. The sequence is that of Undecaprenyl phosphate-alpha-4-amino-4-deoxy-L-arabinose arabinosyl transferase 2 from Pseudomonas fluorescens (strain ATCC BAA-477 / NRRL B-23932 / Pf-5).